The sequence spans 254 residues: MMKGWMKCGLAGAVVLMASFWGGSVRAAGMSLTQVSGPVYVVEDNYYVQENSMVYFGAKGVTVVGATWTPDTARELHKLIKRVSRKPVLEVINTNYHTDRAGGNAYWKSIGAKVVSTRQTRDLMKSDWAEIVAFTRKGLPEYPDLPLVLPNVVHDGDFTLQEGKVRAFYAGPAHTPDGIFVYFPDEQVLYGNCILKEKLGNLSFADVKAYPQTLERLKAMKLPIKTVIGGHDSPLHGPELIDHYEALIKAAPQS.

An N-terminal signal peptide occupies residues 1–27 (MMKGWMKCGLAGAVVLMASFWGGSVRA). Asp99 contributes to the Zn(2+) binding site. Residues Thr135 and His174 each contribute to the substrate site. Cys193 serves as a coordination point for Zn(2+). 2 residues coordinate substrate: Lys196 and Asn201. His231 contacts Zn(2+).

Belongs to the metallo-beta-lactamase superfamily. Class-B beta-lactamase family. As to quaternary structure, monomer. Zn(2+) serves as cofactor.

Its subcellular location is the periplasm. The enzyme catalyses a beta-lactam + H2O = a substituted beta-amino acid. With respect to regulation, competitively inhibited by mercaptophosphonate and pyridine carboxylate derivatives. Also inhibited by the binding of a second zinc ion and by chelating agents such as EDTA. In terms of biological role, confers resistance to the different beta-lactams antibiotics (penicillin, cephalosporin and carbapenem) via the hydrolysis of the beta-lactam ring. It is able to hydrolyze penicillin and imipenem, but is much less active against cephalothin, cefotaxime, meropenem and ceftazidime. This chain is Metallo-beta-lactamase type 2, found in Aeromonas hydrophila.